The sequence spans 269 residues: Monofunctional glycosyltransferase (269 aa).

The chain crosses the membrane as a helical span at residues 46–66; sequence ILLTILIIIALFIGIMYFLST.

Belongs to the glycosyltransferase 51 family.

The protein localises to the cell membrane. The enzyme catalyses [GlcNAc-(1-&gt;4)-Mur2Ac(oyl-L-Ala-gamma-D-Glu-L-Lys-D-Ala-D-Ala)](n)-di-trans,octa-cis-undecaprenyl diphosphate + beta-D-GlcNAc-(1-&gt;4)-Mur2Ac(oyl-L-Ala-gamma-D-Glu-L-Lys-D-Ala-D-Ala)-di-trans,octa-cis-undecaprenyl diphosphate = [GlcNAc-(1-&gt;4)-Mur2Ac(oyl-L-Ala-gamma-D-Glu-L-Lys-D-Ala-D-Ala)](n+1)-di-trans,octa-cis-undecaprenyl diphosphate + di-trans,octa-cis-undecaprenyl diphosphate + H(+). The protein operates within cell wall biogenesis; peptidoglycan biosynthesis. In terms of biological role, peptidoglycan polymerase that catalyzes glycan chain elongation using lipid-linked disaccharide-pentapeptide as the substrate. The chain is Monofunctional glycosyltransferase from Staphylococcus aureus (strain Newman).